Consider the following 229-residue polypeptide: ATP-dependent Clp protease proteolytic subunit 1 (229 aa).

Catalysis depends on serine 129, which acts as the Nucleophile. Histidine 154 is a catalytic residue.

The protein belongs to the peptidase S14 family. As to quaternary structure, fourteen ClpP subunits assemble into 2 heptameric rings which stack back to back to give a disk-like structure with a central cavity, resembling the structure of eukaryotic proteasomes.

The protein localises to the cytoplasm. It catalyses the reaction Hydrolysis of proteins to small peptides in the presence of ATP and magnesium. alpha-casein is the usual test substrate. In the absence of ATP, only oligopeptides shorter than five residues are hydrolyzed (such as succinyl-Leu-Tyr-|-NHMec, and Leu-Tyr-Leu-|-Tyr-Trp, in which cleavage of the -Tyr-|-Leu- and -Tyr-|-Trp bonds also occurs).. Functionally, cleaves peptides in various proteins in a process that requires ATP hydrolysis. Has a chymotrypsin-like activity. Plays a major role in the degradation of misfolded proteins. The protein is ATP-dependent Clp protease proteolytic subunit 1 of Thermosynechococcus vestitus (strain NIES-2133 / IAM M-273 / BP-1).